Reading from the N-terminus, the 438-residue chain is Aspartate--tRNA(Asp) ligase (438 aa).

Glutamate 170 lines the L-aspartate pocket. An aspartate region spans residues 192-195 (QLYK). Arginine 214 contacts L-aspartate. Residues 214–216 (RAE), 222–224 (RHL), and glutamate 361 contribute to the ATP site. Residues glutamate 361 and serine 364 each contribute to the Mg(2+) site. Positions 364 and 368 each coordinate L-aspartate. Position 409 to 412 (409 to 412 (GAER)) interacts with ATP.

The protein belongs to the class-II aminoacyl-tRNA synthetase family. Type 2 subfamily. As to quaternary structure, homodimer. It depends on Mg(2+) as a cofactor.

It is found in the cytoplasm. The enzyme catalyses tRNA(Asp) + L-aspartate + ATP = L-aspartyl-tRNA(Asp) + AMP + diphosphate. Its function is as follows. Catalyzes the attachment of L-aspartate to tRNA(Asp) in a two-step reaction: L-aspartate is first activated by ATP to form Asp-AMP and then transferred to the acceptor end of tRNA(Asp). Is specific for tRNA(Asp) since it aspartylates tRNA(Asn) 3 orders of magnitude less efficiently than tRNA(Asp). The polypeptide is Aspartate--tRNA(Asp) ligase (Thermococcus kodakarensis (strain ATCC BAA-918 / JCM 12380 / KOD1) (Pyrococcus kodakaraensis (strain KOD1))).